The chain runs to 114 residues: QAPKIIETITDNREDDGAGNYFYEFETENGIRQSVRGTPGAAGAVIKTGSFSFPLDDGTLAEFIFEADEYGYRVDSPLIPVAPPNPSHVEELLQIVAQLKAQGAQWNDQGERID.

Gln1 bears the Pyrrolidone carboxylic acid mark. A Chitin-binding type R&amp;R domain is found at 18–83; sequence AGNYFYEFET…VDSPLIPVAP (66 aa).

As to expression, arthrodial membrane.

The protein is Cuticle protein AMP5 of Homarus americanus (American lobster).